A 193-amino-acid chain; its full sequence is Ubiquitin-conjugating enzyme E2 E1 (193 aa).

Residues 1 to 45 (MSDDDSRASTSSSSSSSSNQQTEKEGSTPKKKESKVSMSKNSKLL) form a disordered region. Ser-2 carries the post-translational modification N-acetylserine. Residues 8–18 (ASTSSSSSSSS) show a composition bias toward low complexity. Residues 22–35 (TEKEGSTPKKKESK) are compositionally biased toward basic and acidic residues. The span at 36–45 (VSMSKNSKLL) shows a compositional bias: polar residues. The UBC core domain maps to 47–193 (TSAKRIQKEL…ARQWTKRYAT (147 aa)). The Glycyl thioester intermediate role is filled by Cys-131. Lys-136 is covalently cross-linked (Glycyl lysine isopeptide (Lys-Gly) (interchain with G-Cter in ISG15)).

Belongs to the ubiquitin-conjugating enzyme family. As to quaternary structure, interacts with RNF14. ISGylation suppresses ubiquitin E2 enzyme activity. In terms of processing, autoubiquitinated.

It localises to the nucleus. The catalysed reaction is S-ubiquitinyl-[E1 ubiquitin-activating enzyme]-L-cysteine + [E2 ubiquitin-conjugating enzyme]-L-cysteine = [E1 ubiquitin-activating enzyme]-L-cysteine + S-ubiquitinyl-[E2 ubiquitin-conjugating enzyme]-L-cysteine.. The enzyme catalyses S-ubiquitinyl-[E1 ubiquitin-activating enzyme]-L-cysteine + [acceptor protein]-L-lysine = [E1 ubiquitin-activating enzyme]-L-cysteine + N(6)-monoubiquitinyl-[acceptor protein]-L-lysine.. It functions in the pathway protein modification; protein ubiquitination. Functionally, accepts ubiquitin from the E1 complex and catalyzes its covalent attachment to other proteins. Catalyzes the covalent attachment of ISG15 to other proteins. Mediates the selective degradation of short-lived and abnormal proteins. In vitro also catalyzes 'Lys-48'-linked polyubiquitination. In Mus musculus (Mouse), this protein is Ubiquitin-conjugating enzyme E2 E1 (Ube2e1).